The primary structure comprises 219 residues: ATP-dependent dethiobiotin synthetase BioD (219 aa).

12 to 17 (GVGKTI) contacts ATP. Mg(2+) is bound at residue threonine 16. Lysine 32 is a catalytic residue. Residues aspartate 43 and 96–99 (ETSG) contribute to the ATP site. 2 residues coordinate Mg(2+): aspartate 43 and glutamate 96.

It belongs to the dethiobiotin synthetase family. In terms of assembly, homodimer. It depends on Mg(2+) as a cofactor.

It is found in the cytoplasm. The catalysed reaction is (7R,8S)-7,8-diammoniononanoate + CO2 + ATP = (4R,5S)-dethiobiotin + ADP + phosphate + 3 H(+). Its pathway is cofactor biosynthesis; biotin biosynthesis; biotin from 7,8-diaminononanoate: step 1/2. In terms of biological role, catalyzes a mechanistically unusual reaction, the ATP-dependent insertion of CO2 between the N7 and N8 nitrogen atoms of 7,8-diaminopelargonic acid (DAPA, also called 7,8-diammoniononanoate) to form a ureido ring. The protein is ATP-dependent dethiobiotin synthetase BioD of Chlamydia pneumoniae (Chlamydophila pneumoniae).